The following is a 289-amino-acid chain: Bifunctional protein FolD (289 aa).

NADP(+) contacts are provided by residues 166 to 168, Ser-191, and Ile-232; that span reads GRS.

The protein belongs to the tetrahydrofolate dehydrogenase/cyclohydrolase family. As to quaternary structure, homodimer.

The enzyme catalyses (6R)-5,10-methylene-5,6,7,8-tetrahydrofolate + NADP(+) = (6R)-5,10-methenyltetrahydrofolate + NADPH. It catalyses the reaction (6R)-5,10-methenyltetrahydrofolate + H2O = (6R)-10-formyltetrahydrofolate + H(+). It functions in the pathway one-carbon metabolism; tetrahydrofolate interconversion. Its function is as follows. Catalyzes the oxidation of 5,10-methylenetetrahydrofolate to 5,10-methenyltetrahydrofolate and then the hydrolysis of 5,10-methenyltetrahydrofolate to 10-formyltetrahydrofolate. In Synechococcus sp. (strain JA-3-3Ab) (Cyanobacteria bacterium Yellowstone A-Prime), this protein is Bifunctional protein FolD.